The following is a 255-amino-acid chain: Ras-like protein family member 12 (255 aa).

Residues 30–37 (GAMGSGKS), 77–81 (DTADQ), and 137–140 (NKVD) each bind GTP.

It belongs to the small GTPase superfamily. Ras family.

It carries out the reaction GTP + H2O = GDP + phosphate + H(+). The polypeptide is Ras-like protein family member 12 (RASL12) (Danio rerio (Zebrafish)).